A 372-amino-acid polypeptide reads, in one-letter code: Chaperone protein DnaJ (372 aa).

One can recognise a J domain in the interval 5–70; sequence DYYDVLGVER…QKRANYDQYG (66 aa). The CR-type zinc-finger motif lies at 130-208; it reads GTTKDIQINT…CHGDGRVHKK (79 aa). Zn(2+) contacts are provided by C143, C146, C160, C163, C182, C185, C196, and C199. 4 CXXCXGXG motif repeats span residues 143-150, 160-167, 182-189, and 196-203; these read CDSCDGSG, CSTCHGAG, CPSCHGSG, and CKSCHGDG.

This sequence belongs to the DnaJ family. In terms of assembly, homodimer. Zn(2+) serves as cofactor.

The protein resides in the cytoplasm. In terms of biological role, participates actively in the response to hyperosmotic and heat shock by preventing the aggregation of stress-denatured proteins and by disaggregating proteins, also in an autonomous, DnaK-independent fashion. Unfolded proteins bind initially to DnaJ; upon interaction with the DnaJ-bound protein, DnaK hydrolyzes its bound ATP, resulting in the formation of a stable complex. GrpE releases ADP from DnaK; ATP binding to DnaK triggers the release of the substrate protein, thus completing the reaction cycle. Several rounds of ATP-dependent interactions between DnaJ, DnaK and GrpE are required for fully efficient folding. Also involved, together with DnaK and GrpE, in the DNA replication of plasmids through activation of initiation proteins. This chain is Chaperone protein DnaJ, found in Pasteurella multocida (strain Pm70).